The chain runs to 323 residues: Elongation factor P--(R)-beta-lysine ligase (323 aa).

76–78 (SPE) contacts substrate. ATP is bound by residues 100-102 (RNE) and asparagine 109. Tyrosine 118 is a binding site for substrate. An ATP-binding site is contributed by 242 to 243 (EL). Residue glutamate 249 participates in substrate binding. Glycine 298 is an ATP binding site.

The protein belongs to the class-II aminoacyl-tRNA synthetase family. EpmA subfamily. In terms of assembly, homodimer.

The catalysed reaction is D-beta-lysine + L-lysyl-[protein] + ATP = N(6)-((3R)-3,6-diaminohexanoyl)-L-lysyl-[protein] + AMP + diphosphate + H(+). In terms of biological role, with EpmB is involved in the beta-lysylation step of the post-translational modification of translation elongation factor P (EF-P). Catalyzes the ATP-dependent activation of (R)-beta-lysine produced by EpmB, forming a lysyl-adenylate, from which the beta-lysyl moiety is then transferred to the epsilon-amino group of a conserved specific lysine residue in EF-P. The sequence is that of Elongation factor P--(R)-beta-lysine ligase from Mannheimia succiniciproducens (strain KCTC 0769BP / MBEL55E).